The following is a 315-amino-acid chain: Acetyl-coenzyme A carboxylase carboxyl transferase subunit alpha (315 aa).

The 255-residue stretch at 38–292 (RLQKKSNELT…KLRLKEDLAE (255 aa)) folds into the CoA carboxyltransferase C-terminal domain.

The protein belongs to the AccA family. Acetyl-CoA carboxylase is a heterohexamer composed of biotin carboxyl carrier protein (AccB), biotin carboxylase (AccC) and two subunits each of ACCase subunit alpha (AccA) and ACCase subunit beta (AccD).

It is found in the cytoplasm. It catalyses the reaction N(6)-carboxybiotinyl-L-lysyl-[protein] + acetyl-CoA = N(6)-biotinyl-L-lysyl-[protein] + malonyl-CoA. It functions in the pathway lipid metabolism; malonyl-CoA biosynthesis; malonyl-CoA from acetyl-CoA: step 1/1. Its function is as follows. Component of the acetyl coenzyme A carboxylase (ACC) complex. First, biotin carboxylase catalyzes the carboxylation of biotin on its carrier protein (BCCP) and then the CO(2) group is transferred by the carboxyltransferase to acetyl-CoA to form malonyl-CoA. This chain is Acetyl-coenzyme A carboxylase carboxyl transferase subunit alpha, found in Haemophilus influenzae (strain 86-028NP).